The primary structure comprises 473 residues: Proline transporter 1 (473 aa).

Over residues 1–11 (MDQHQLDEENQ) the composition is skewed to basic and acidic residues. The tract at residues 1–31 (MDQHQLDEENQRAALFHSSAPSSSLGADGEE) is disordered. A run of 11 helical transmembrane segments spans residues 65–85 (PWYQ…VLGY), 88–108 (SIMV…AAAI), 145–165 (LTWA…IILA), 188–208 (IALS…LSAL), 210–230 (IWLG…FVMS), 252–272 (IFTT…GMLP), 290–310 (LWFQ…MGYW), 333–353 (VANL…ASPM), 378–398 (VGVR…LPFL), 401–421 (FMSL…ANHM), and 437–457 (WHWL…VAAV).

Belongs to the amino acid/polyamine transporter 2 family. Amino acid/auxin permease (AAAP) (TC 2.A.18.3) subfamily. Expressed in roots, leaf blades and sheaths, stems and young panicle.

The protein resides in the cell membrane. Proline transporter that mediates proline transport across the plasma membrane when expressed in a heterologous system (Xenopus oocytes). This Oryza sativa subsp. japonica (Rice) protein is Proline transporter 1 (PROT1).